The chain runs to 247 residues: Syntaxin-like protein fsv1 (247 aa).

Residues 27–94 (NPDEEIESSL…FEKQRRASSI (68 aa)) are a coiled coil. Positions 88–130 (QRRASSIPADGTSAFSANPQVASTNNKLTPLPSLQKTTSSSEG) are disordered. Residues 100–130 (SAFSANPQVASTNNKLTPLPSLQKTTSSSEG) show a composition bias toward polar residues. The t-SNARE coiled-coil homology domain occupies 159-221 (QQMLNEQEES…DHAKNRLNKV (63 aa)).

Its subcellular location is the golgi apparatus membrane. It is found in the prevacuolar compartment membrane. In terms of biological role, involved in vesicle-mediated protein transport between the Golgi and the vacuole. This is Syntaxin-like protein fsv1 (fsv1) from Schizosaccharomyces pombe (strain 972 / ATCC 24843) (Fission yeast).